A 74-amino-acid chain; its full sequence is uncharacterized protein (74 aa).

The N-terminal stretch at 1–19 (MIGLIVVPILFAIKGIVVG) is a signal peptide. Residues 26-74 (KFGKHSNTKDQKEDKDEDKRQSISQRKQHTEWPIEENRIQRRAPNQSAL) form a disordered region. Composition is skewed to basic and acidic residues over residues 32-46 (NTKD…DKRQ) and 53-64 (QHTEWPIEENRI).

This is an uncharacterized protein from Saccharomyces cerevisiae (strain ATCC 204508 / S288c) (Baker's yeast).